Consider the following 119-residue polypeptide: Insulin growth factor-like family member 2 (119 aa).

The signal sequence occupies residues methionine 1–alanine 25.

It belongs to the IGFL family. In terms of tissue distribution, detected in cerebellum, heart, placenta, spleen, stomach, testis and thymus.

It localises to the secreted. Its function is as follows. Potential ligand of the IGFLR1 cell membrane receptor. This chain is Insulin growth factor-like family member 2 (IGFL2), found in Homo sapiens (Human).